Consider the following 201-residue polypeptide: Probable nicotinate-nucleotide adenylyltransferase (201 aa).

The segment at 182–201 (GPESSQSATSIRERGGWSLR) is disordered. Residues 192–201 (IRERGGWSLR) show a composition bias toward basic and acidic residues.

This sequence belongs to the NadD family.

It carries out the reaction nicotinate beta-D-ribonucleotide + ATP + H(+) = deamido-NAD(+) + diphosphate. It participates in cofactor biosynthesis; NAD(+) biosynthesis; deamido-NAD(+) from nicotinate D-ribonucleotide: step 1/1. Functionally, catalyzes the reversible adenylation of nicotinate mononucleotide (NaMN) to nicotinic acid adenine dinucleotide (NaAD). This chain is Probable nicotinate-nucleotide adenylyltransferase, found in Parvibaculum lavamentivorans (strain DS-1 / DSM 13023 / NCIMB 13966).